The chain runs to 126 residues: Large ribosomal subunit protein uL22 (126 aa).

The protein belongs to the universal ribosomal protein uL22 family. Part of the 50S ribosomal subunit.

In terms of biological role, this protein binds specifically to 23S rRNA; its binding is stimulated by other ribosomal proteins, e.g. L4, L17, and L20. It is important during the early stages of 50S assembly. It makes multiple contacts with different domains of the 23S rRNA in the assembled 50S subunit and ribosome. The globular domain of the protein is located near the polypeptide exit tunnel on the outside of the subunit, while an extended beta-hairpin is found that lines the wall of the exit tunnel in the center of the 70S ribosome. The polypeptide is Large ribosomal subunit protein uL22 (Bradyrhizobium sp. (strain BTAi1 / ATCC BAA-1182)).